We begin with the raw amino-acid sequence, 152 residues long: UPF0266 membrane protein YobD (152 aa).

3 helical membrane passes run 6–26, 45–65, and 67–87; these read LLLILFIAALLAYALYDQFIM, VDSVIFVGLVAILIYNNVTSH, and AQMTTWLLSALALMGFYIFWI.

Belongs to the UPF0266 family.

Its subcellular location is the cell inner membrane. This chain is UPF0266 membrane protein YobD, found in Salmonella paratyphi C (strain RKS4594).